Consider the following 86-residue polypeptide: U15-lycotoxin-Ls1d (86 aa).

The signal sequence occupies residues 1–20; that stretch reads MNSKIFAVLLLLGLLSCVLS. The 46-residue stretch at 21–66 folds into the WAP domain; that stretch reads DQYCPKSSITACKKMNIRNDCCKDDDCTGGSWCCATPCGNFCKYPT. 5 disulfide bridges follow: Cys24–Cys54, Cys32–Cys58, Cys41–Cys53, Cys42–Cys80, and Cys47–Cys62.

The protein belongs to the venom protein 11 family. 01 (wap-1) subfamily. In terms of processing, contains 5 disulfide bonds. Expressed by the venom gland.

The protein resides in the secreted. Its function is as follows. Has antibacterial activity. The sequence is that of U15-lycotoxin-Ls1d from Lycosa singoriensis (Wolf spider).